The sequence spans 124 residues: Large ribosomal subunit protein bL12 (124 aa).

It belongs to the bacterial ribosomal protein bL12 family. As to quaternary structure, homodimer. Part of the ribosomal stalk of the 50S ribosomal subunit. Forms a multimeric L10(L12)X complex, where L10 forms an elongated spine to which 2 to 4 L12 dimers bind in a sequential fashion. Binds GTP-bound translation factors.

Forms part of the ribosomal stalk which helps the ribosome interact with GTP-bound translation factors. Is thus essential for accurate translation. The sequence is that of Large ribosomal subunit protein bL12 from Burkholderia cenocepacia (strain HI2424).